The chain runs to 381 residues: Neuropeptide Y receptor type 2 (381 aa).

The disordered stretch occupies residues 1-37; sequence MGPVGAEADENQTVEVKVEPYGPGHTTPRGELPPDPE. The Extracellular segment spans residues 1–51; sequence MGPVGAEADENQTVEVKVEPYGPGHTTPRGELPPDPEPELIDSTKLVEVQV. A glycan (N-linked (GlcNAc...) asparagine) is linked at N11. The helical transmembrane segment at 52 to 72 threads the bilayer; the sequence is ILILAYCSIILLGVVGNSLVI. Residues 73–86 are Cytoplasmic-facing; it reads HVVIKFKSMRTVTN. A helical membrane pass occupies residues 87 to 107; the sequence is FFIANLAVADLLVNTLCLPFT. Topologically, residues 108-124 are extracellular; that stretch reads LTYTLMGEWKMGPVLCH. Cysteines 123 and 203 form a disulfide. Residues 125-145 form a helical membrane-spanning segment; that stretch reads LVPYAQGLAVQVSTITLTVIA. The Cytoplasmic segment spans residues 146-165; it reads LDRHRCIVYHLESKISKRIS. The helical transmembrane segment at 166 to 186 threads the bilayer; the sequence is FLIIGLAWGISALLASPLAIF. Residues 187–216 are Extracellular-facing; that stretch reads REYSLIEIIPDFEIVACTEKWPGEEKSVYG. A helical transmembrane segment spans residues 217-237; that stretch reads TVYSLSTLLILYVLPLGIISF. The Cytoplasmic portion of the chain corresponds to 238 to 268; that stretch reads SYTRIWSKLRNHVSPGAASDHYHQRRHKMTK. The chain crosses the membrane as a helical span at residues 269–289; sequence MLVCVVVVFAVSWLPLHAFQL. Over 290-304 the chain is Extracellular; the sequence is AVDIDSHVLDLKEYK. The chain crosses the membrane as a helical span at residues 305–325; it reads LIFTVFHIIAMCSTFANPLLY. The Cytoplasmic portion of the chain corresponds to 326-381; it reads GWMNSNYRKAFLSAFRCEQRLDAIHSEVSMTFKAKKNLEVKKNNGPTDSFSEATNV. C342 is lipidated: S-palmitoyl cysteine.

Belongs to the G-protein coupled receptor 1 family.

The protein localises to the cell membrane. Its function is as follows. Receptor for neuropeptide Y and peptide YY. In Mus musculus (Mouse), this protein is Neuropeptide Y receptor type 2 (Npy2r).